Consider the following 365-residue polypeptide: 5-hydroxytryptamine receptor 1E (365 aa).

At 1–22 the chain is on the extracellular side; it reads MNITNCTTDASMVVRPKTVTEK. 2 N-linked (GlcNAc...) asparagine glycosylation sites follow: asparagine 2 and asparagine 5. Residues 23-47 form a helical membrane-spanning segment; that stretch reads MLICMTLVIITTLTMLLNSAVIMAI. Residues 48–59 are Cytoplasmic-facing; it reads CTTKKLHQPANY. The chain crosses the membrane as a helical span at residues 60–82; sequence LICSLAVTDLLVAVLVMPLSIMY. At 83 to 96 the chain is on the extracellular side; that stretch reads IVMDSWRLGYFICE. A disulfide bridge links cysteine 95 with cysteine 173. The helical transmembrane segment at 97-118 threads the bilayer; the sequence is VWLSVDMTCCTCSILHLCVIAL. Ergotamine-binding residues include aspartate 102 and threonine 107. The DRY motif; important for ligand-induced conformation changes motif lies at 119 to 121; the sequence is DRY. Residues 119–138 lie on the Cytoplasmic side of the membrane; the sequence is DRYWAITNAIEYARKRTAKR. A helical transmembrane segment spans residues 139–160; sequence AGLMILTVWTISIFISMPPLFW. Residues 161–179 are Extracellular-facing; the sequence is RSHRQLSPPPSQCTIQHDH. Isoleucine 175 contributes to the ergotamine binding site. A helical transmembrane segment spans residues 180-202; it reads VIYTIYSTFGAFYIPLTLILILY. At 203 to 291 the chain is on the cytoplasmic side; it reads YRIYHAAKSL…SSTRERKAAR (89 aa). Residues 292-314 form a helical membrane-spanning segment; that stretch reads ILGLILGAFILSWLPFFIKELIV. Residues 315 to 324 are Extracellular-facing; sequence GLSIYTVSSE. Residues 325-347 form a helical membrane-spanning segment; sequence VGDFLTWLGYVNSLINPLLYTSF. The NPxxY motif; important for ligand-induced conformation changes and signaling motif lies at 340–344; that stretch reads NPLLY. The Cytoplasmic segment spans residues 348–365; it reads NEDFKLAFKKLIRCREHT.

The protein belongs to the G-protein coupled receptor 1 family. In terms of tissue distribution, detected in the brain with the greatest abundance in the hippocampus, followed by the olfactory bulb. Lower levels are detected in the cortex, thalamus, pons, hypothalamus, midbrain, striatum, and cerebellum.

It localises to the cell membrane. G-protein coupled receptor for 5-hydroxytryptamine (serotonin). Also functions as a receptor for various alkaloids and psychoactive substances. Ligand binding causes a conformation change that triggers signaling via guanine nucleotide-binding proteins (G proteins) and modulates the activity of down-stream effectors, such as adenylate cyclase. Signaling inhibits adenylate cyclase activity. The sequence is that of 5-hydroxytryptamine receptor 1E (5HT1E) from Cavia porcellus (Guinea pig).